Reading from the N-terminus, the 147-residue chain is Large ribosomal subunit protein bL9 (147 aa).

Belongs to the bacterial ribosomal protein bL9 family.

Functionally, binds to the 23S rRNA. This is Large ribosomal subunit protein bL9 from Mesoplasma florum (strain ATCC 33453 / NBRC 100688 / NCTC 11704 / L1) (Acholeplasma florum).